The following is a 712-amino-acid chain: Potassium transporter 1 (712 aa).

At 1–19 the chain is on the cytoplasmic side; sequence MNQSPSLIEQGISQQHLKT. A helical membrane pass occupies residues 20-40; sequence LSCANVLTLAYQSLGVIYGDL. Residues 41–67 lie on the Extracellular side of the membrane; the sequence is STSPLYVYKTTFSGKLSLHEDDEEIFG. The chain crosses the membrane as a helical span at residues 68–88; it reads VFSFIFWTFTLIALFKYVFIV. Over 89–154 the chain is Cytoplasmic; it reads LSADDNGEGG…FFEKHPKSQK (66 aa). A helical membrane pass occupies residues 155-175; the sequence is CLLLFVLLGTCMAIGDSVLTP. At 176-189 the chain is on the extracellular side; it reads TISVLSAVSGVKLK. A helical transmembrane segment spans residues 190–210; that stretch reads IPNLHENYVVIIACIILVAIF. Residues 211–219 are Cytoplasmic-facing; that stretch reads SVQRYGTHR. Residues 220-240 form a helical membrane-spanning segment; that stretch reads VAFIFAPISTAWLLSISSIGV. At 241-267 the chain is on the extracellular side; the sequence is YNTIKWNPRIVSALSPVYMYKFLRSTG. Residues 268–288 form a helical membrane-spanning segment; it reads VEGWVSLGGVVLSITGVETMF. At 289-300 the chain is on the cytoplasmic side; that stretch reads ADLGHFSSLSIK. The helical transmembrane segment at 301–321 threads the bilayer; that stretch reads VAFSFFVYPCLILAYMGEAAF. The Extracellular portion of the chain corresponds to 322–340; it reads LSKHHEDIQQSFYKAIPEP. A helical transmembrane segment spans residues 341-361; it reads VFWPVFIVATFAAVVGSQAVI. At 362-392 the chain is on the cytoplasmic side; sequence SATFSIISQCCALDCFPRVKIIHTSSKIHGQ. The helical transmembrane segment at 393-413 threads the bilayer; it reads IYIPEVNWMLMCLCLAVTIGL. Residues 414 to 424 are Extracellular-facing; it reads RDTNMMGHAYG. The helical transmembrane segment at 425–445 threads the bilayer; the sequence is LAVTSVMLVTTCLMTLVMTIV. Residues 446–449 lie on the Cytoplasmic side of the membrane; sequence WKQR. The chain crosses the membrane as a helical span at residues 450 to 470; that stretch reads IITVLAFVVFFGSIELLYFSS. The Extracellular portion of the chain corresponds to 471–474; sequence CVYK. Residues 475–495 traverse the membrane as a helical segment; that stretch reads VPEGGWIPILLSLTFMAVMYI. Residues 496-712 lie on the Cytoplasmic side of the membrane; that stretch reads WNYGTTKKHE…LLEVGMVYYV (217 aa).

It belongs to the HAK/KUP transporter (TC 2.A.72.3) family. In terms of tissue distribution, detected in the whole mature plant but preferentially expressed in roots and stems, and in potassium-starved plants.

The protein localises to the cell membrane. Its function is as follows. High-affinity potassium transporter that could play a major role in the uptake of potassium from the rhizosphere. May act as a low-affinity potassium transporter under high potassium concentrations. Could also transport rubidium. This is Potassium transporter 1 (POT1) from Arabidopsis thaliana (Mouse-ear cress).